The sequence spans 261 residues: Carbonic anhydrase 1 (261 aa).

Ala2 carries the N-acetylalanine modification. Residues 4–261 (PDWGYDDKNG…LKGRTVRASF (258 aa)) form the Alpha-carbonic anhydrase domain. His65 serves as the catalytic Proton donor/acceptor. Zn(2+) contacts are provided by His95, His97, and His120. Substrate contacts are provided by residues Thr200 and 200–201 (TH). Positions 238-261 (NPVPIQRNNRPTQPLKGRTVRASF) are disordered.

Belongs to the alpha-carbonic anhydrase family. It depends on Zn(2+) as a cofactor.

Its subcellular location is the cytoplasm. It catalyses the reaction hydrogencarbonate + H(+) = CO2 + H2O. It carries out the reaction urea = cyanamide + H2O. With respect to regulation, inhibited by acetazolamide. Its function is as follows. Catalyzes the reversible hydration of carbon dioxide. Can hydrate cyanamide to urea. This chain is Carbonic anhydrase 1 (CA1), found in Macaca mulatta (Rhesus macaque).